Here is a 347-residue protein sequence, read N- to C-terminus: Probable cytosolic iron-sulfur protein assembly protein 1 (347 aa).

WD repeat units follow at residues 11–48 (LHNE…DGLV), 62–101 (SHKK…GDAD), 122–161 (GHEN…EEYE), 168–207 (EHSQ…WEAA), 212–255 (GHEG…SIEE), 266–304 (VHGK…VWEV), and 311–347 (SHSI…WAYN).

The protein belongs to the WD repeat CIA1 family. Interacts with NAR1.

It is found in the cytoplasm. Its subcellular location is the nucleus. Essential component of the cytosolic iron-sulfur (Fe/S) protein assembly machinery. Required for the maturation of extramitochondrial Fe/S proteins. This chain is Probable cytosolic iron-sulfur protein assembly protein 1, found in Vanderwaltozyma polyspora (strain ATCC 22028 / DSM 70294 / BCRC 21397 / CBS 2163 / NBRC 10782 / NRRL Y-8283 / UCD 57-17) (Kluyveromyces polysporus).